Reading from the N-terminus, the 443-residue chain is Proline--tRNA ligase (443 aa).

It belongs to the class-II aminoacyl-tRNA synthetase family. ProS type 2 subfamily. Homodimer.

The protein resides in the cytoplasm. It catalyses the reaction tRNA(Pro) + L-proline + ATP = L-prolyl-tRNA(Pro) + AMP + diphosphate. Catalyzes the attachment of proline to tRNA(Pro) in a two-step reaction: proline is first activated by ATP to form Pro-AMP and then transferred to the acceptor end of tRNA(Pro). This is Proline--tRNA ligase from Caulobacter vibrioides (strain ATCC 19089 / CIP 103742 / CB 15) (Caulobacter crescentus).